Here is a 397-residue protein sequence, read N- to C-terminus: Elongation factor Tu (397 aa).

Residues 10–207 (KPHVNIGTIG…AVDESIPDPV (198 aa)) form the tr-type G domain. The G1 stretch occupies residues 19-26 (GHVDHGKT). Residue 19 to 26 (GHVDHGKT) coordinates GTP. Thr26 contacts Mg(2+). A G2 region spans residues 63 to 67 (GITIN). The tract at residues 84 to 87 (DAPG) is G3. GTP-binding positions include 84–88 (DAPGH) and 139–142 (NKAD). A G4 region spans residues 139 to 142 (NKAD). The G5 stretch occupies residues 177 to 179 (SGL).

This sequence belongs to the TRAFAC class translation factor GTPase superfamily. Classic translation factor GTPase family. EF-Tu/EF-1A subfamily. As to quaternary structure, monomer.

The protein localises to the cytoplasm. It catalyses the reaction GTP + H2O = GDP + phosphate + H(+). Its function is as follows. GTP hydrolase that promotes the GTP-dependent binding of aminoacyl-tRNA to the A-site of ribosomes during protein biosynthesis. This chain is Elongation factor Tu, found in Tropheryma whipplei (strain Twist) (Whipple's bacillus).